Reading from the N-terminus, the 307-residue chain is Thioredoxin reductase (307 aa).

36–43 serves as a coordination point for FAD; that stretch reads DNAAPGGK. Residues Cys138 and Cys141 are joined by a disulfide bond. Residue 278–287 coordinates FAD; that stretch reads DIRIKDIRQI.

This sequence belongs to the class-II pyridine nucleotide-disulfide oxidoreductase family. In terms of assembly, homodimer. FAD serves as cofactor.

It localises to the cytoplasm. The enzyme catalyses [thioredoxin]-dithiol + NADP(+) = [thioredoxin]-disulfide + NADPH + H(+). The sequence is that of Thioredoxin reductase (trxB) from Mycoplasmopsis pulmonis (strain UAB CTIP) (Mycoplasma pulmonis).